Consider the following 62-residue polypeptide: Cryptic Mu-phage protein com (62 aa).

The protein belongs to the com family.

The protein is Cryptic Mu-phage protein com of Shigella dysenteriae.